A 361-amino-acid polypeptide reads, in one-letter code: MEKKMFNSLMKIHQKYQDLKQLLETDQILNDQKQYLQIAKEIASISEIIEVFQKFLDDQKVLEDAKTILIQEDDPELIQLAKVEIATMSKNIEEYEKKLLILMLPKDKNDEKDVIVEIRGAAGGDEANIFVGDLFKMYHKWADSQKAKVKVLSSSLALAGGFSQIIFQISGQKIYSKLKFESGVHRVQRVPATETMGRIHTSTATVTVMPKIDEKIEIEINPSDLKIDTYRSSGAGGQSVNTTDSAVRITHIPTGIVVTSQDERSQIGNKEIAMGILKSKIYNLELQKQQQKQSDFRKLAGSGARSEKIRTYNYPQDRLTDHRINFSTSLKPIIQGSLNPIIEALLAQEKTELILQNYANK.

At Gln-238 the chain carries N5-methylglutamine.

The protein belongs to the prokaryotic/mitochondrial release factor family. In terms of processing, methylated by PrmC. Methylation increases the termination efficiency of RF1.

Its subcellular location is the cytoplasm. Functionally, peptide chain release factor 1 directs the termination of translation in response to the peptide chain termination codons UAG and UAA. This Mesomycoplasma hyopneumoniae (strain J / ATCC 25934 / NCTC 10110) (Mycoplasma hyopneumoniae) protein is Peptide chain release factor 1.